Here is an 892-residue protein sequence, read N- to C-terminus: Translation initiation factor IF-2 (892 aa).

The tract at residues 88-304 (KKRTFVKRDP…SSLQQGFQKP (217 aa)) is disordered. 2 stretches are compositionally biased toward basic and acidic residues: residues 93–159 (VKRD…KDKV) and 166–216 (DMTK…EENK). The segment covering 254–269 (GRGRNAKAARPAKKGK) has biased composition (basic residues). Basic and acidic residues predominate over residues 270–282 (HAESKADREEARA). The tr-type G domain occupies 391–560 (PRAPVVTIMG…LLQAEVLELK (170 aa)). A G1 region spans residues 400 to 407 (GHVDHGKT). GTP is bound at residue 400–407 (GHVDHGKT). The tract at residues 425-429 (GITQH) is G2. Positions 446 to 449 (DTPG) are G3. GTP contacts are provided by residues 446–450 (DTPGH) and 500–503 (NKID). The interval 500 to 503 (NKID) is G4. The segment at 536-538 (SAK) is G5.

Belongs to the TRAFAC class translation factor GTPase superfamily. Classic translation factor GTPase family. IF-2 subfamily.

Its subcellular location is the cytoplasm. One of the essential components for the initiation of protein synthesis. Protects formylmethionyl-tRNA from spontaneous hydrolysis and promotes its binding to the 30S ribosomal subunits. Also involved in the hydrolysis of GTP during the formation of the 70S ribosomal complex. The polypeptide is Translation initiation factor IF-2 (Salmonella choleraesuis (strain SC-B67)).